A 1049-amino-acid chain; its full sequence is Protein phosphatase 1 regulatory subunit 12A (1049 aa).

ANK repeat units lie at residues aspartate 39–tyrosine 68, aspartate 72–glutamine 101, glutamate 105–valine 134, glutamate 138–valine 164, serine 198–isoleucine 227, and aspartate 231–valine 260. Residues leucine 302–aspartate 947 are disordered. Positions isoleucine 303–valine 315 are enriched in polar residues. The segment covering lysine 319–glutamate 341 has biased composition (basic and acidic residues). A compositionally biased stretch (acidic residues) spans serine 359–asparagine 371. A compositionally biased stretch (low complexity) spans serine 378–proline 421. Basic and acidic residues predominate over residues serine 426–serine 436. Positions arginine 473–leucine 484 are enriched in low complexity. The segment covering aspartate 485–arginine 497 has biased composition (basic and acidic residues). Over residues serine 545–threonine 564 the composition is skewed to polar residues. The span at serine 571 to lysine 592 shows a compositional bias: low complexity. Positions alanine 593–arginine 607 are enriched in polar residues. A compositionally biased stretch (low complexity) spans serine 620–threonine 639. Basic and acidic residues predominate over residues tryptophan 649 to serine 664. Positions alanine 665–valine 686 are enriched in low complexity. Positions valine 702–arginine 711 are enriched in basic and acidic residues. Basic residues predominate over residues lysine 712–arginine 722. The segment covering arginine 747–arginine 789 has biased composition (basic and acidic residues). Residues threonine 790–leucine 819 show a composition bias toward low complexity. A compositionally biased stretch (polar residues) spans asparagine 820–threonine 829. Basic and acidic residues predominate over residues serine 835–isoleucine 863. A compositionally biased stretch (basic residues) spans arginine 864 to serine 875. 2 stretches are compositionally biased toward basic and acidic residues: residues proline 890–serine 906 and glycine 934–aspartate 947.

PP1 comprises a catalytic subunit, and one or several targeting or regulatory subunits. Ppp1r12a mediates binding to myosin.

It is found in the cytoplasm. Its function is as follows. Regulates myosin phosphatase activity. This is Protein phosphatase 1 regulatory subunit 12A (ppp1r12a) from Danio rerio (Zebrafish).